Here is a 727-residue protein sequence, read N- to C-terminus: Cyclin-T1 (727 aa).

S117 carries the post-translational modification Phosphoserine. Positions 253 to 270 match the Nuclear localization signal motif; the sequence is KRIWNWRAWQADRKTKAD. A Glycyl lysine isopeptide (Lys-Gly) (interchain with G-Cter in SUMO2) cross-link involves residue K343. Phosphoserine is present on S389. Residues 389–420 adopt a coiled-coil conformation; that stretch reads SLKEYRAKHAEELAAQKRQLENMEANVKSQYA. K391 carries the post-translational modification N6-acetyllysine. A Glycyl lysine isopeptide (Lys-Gly) (interchain with G-Cter in SUMO2) cross-link involves residue K416. ADP-ribosylserine is present on residues S417 and S475. The interval 481–551 is histidine-rich domain (HRD); sequence IKMRIKVHTA…RLGDPKHSSQ (71 aa). Residue K482 forms a Glycyl lysine isopeptide (Lys-Gly) (interchain with G-Cter in SUMO2) linkage. An N6-(ADP-ribosyl)lysine modification is found at K486. Residues 487-507 are compositionally biased toward basic and acidic residues; the sequence is VHTAADKHNSVDDSVTKNREH. Disordered regions lie at residues 487-631 and 691-727; these read VHTA…QPSC and YMNPRAGGMSSRSGNTDKPRPPPLPSEPPPPLPPLPK. Residue H488 is modified to ADP-ribosylhistidine. A phosphoserine mark is found at S496 and S500. Basic residues predominate over residues 508-531; the sequence is KEKHKTHPSNHHHHHNHHSHKHSH. An ADP-ribosylhistidine modification is found at H531. Residues S532, S550, and S553 each carry the ADP-ribosylserine modification. The residue at position 557 (H557) is an ADP-ribosylhistidine. Over residues 561 to 571 the composition is skewed to low complexity; it reads SLSSSFSSSSS. S564 carries the ADP-ribosylserine modification. The residue at position 565 (S565) is a Phosphoserine. Positions 616–631 are enriched in polar residues; the sequence is GHSSDTSGLHFSQPSC. Over residues 711 to 727 the composition is skewed to pro residues; that stretch reads PPPLPSEPPPPLPPLPK.

The protein belongs to the cyclin family. Cyclin C subfamily. In terms of assembly, cyclin-T1 is the predominant cyclin that associates with CDK9 to form a heterodimer called P-TEFb. P-TEFb forms a complex with AFF4/AF5Q31. Component of a complex which is at least composed of HTATSF1/Tat-SF1, P-TEFb complex, RNA pol II, SUPT5H, and NCL/nucleolin. Component of the 7SK snRNP complex at least composed of P-TEFb (composed of CDK9 and CCNT1/cyclin-T1), HEXIM1, HEXIM2, BCDIN3, SART3 proteins and 7SK and U6 snRNAs. Interacts (via central region) with ZMYND8 (via N-terminus); the interaction is direct and the association appears to occur between homodimeric ZMYND8 and the activated form of the P-TEFb complex. Interacts with BRD4, targets chromatin binding. Interacts with JMJD6. Interacts with MDFIC. Interacts with HSF1. Interacts with HTATSF1. Interacts with TBX21. (Microbial infection) Binds to BIV Tat, however Tat binds TAR RNA in a Cyc-T1-independent mode. ADP-ribosylation on serine residues by PARP1 in response to DNA damage disrupts the phase separation activity of CCNT1, thereby preventing activation of CDK9.

The protein resides in the nucleus. In terms of biological role, regulatory subunit of the cyclin-dependent kinase pair (CDK9/cyclin-T1) complex, also called positive transcription elongation factor B (P-TEFb), which facilitates the transition from abortive to productive elongation by phosphorylating the CTD (C-terminal domain) of the large subunit of RNA polymerase II (RNA Pol II). Required to activate the protein kinase activity of CDK9: acts by mediating formation of liquid-liquid phase separation (LLPS) that enhances binding of P-TEFb to the CTD of RNA Pol II. This chain is Cyclin-T1 (CCNT1), found in Bos taurus (Bovine).